The primary structure comprises 441 residues: Arginine biosynthesis bifunctional protein ArgJ, mitochondrial (441 aa).

Residues Thr-178, Lys-204, Thr-215, Glu-304, Asn-436, and Ser-441 each contribute to the substrate site. Residue Thr-215 is the Nucleophile of the active site.

The protein belongs to the ArgJ family. In terms of assembly, heterodimer of an alpha and a beta chain. Post-translationally, the alpha and beta chains are autoproteolytically processed from a single precursor protein within the mitochondrion.

The protein localises to the mitochondrion matrix. It carries out the reaction N(2)-acetyl-L-ornithine + L-glutamate = N-acetyl-L-glutamate + L-ornithine. The catalysed reaction is L-glutamate + acetyl-CoA = N-acetyl-L-glutamate + CoA + H(+). Its pathway is amino-acid biosynthesis; L-arginine biosynthesis; L-ornithine and N-acetyl-L-glutamate from L-glutamate and N(2)-acetyl-L-ornithine (cyclic): step 1/1. The protein operates within amino-acid biosynthesis; L-arginine biosynthesis; N(2)-acetyl-L-ornithine from L-glutamate: step 1/4. In terms of biological role, catalyzes two activities which are involved in the cyclic version of arginine biosynthesis: the synthesis of acetylglutamate from glutamate and acetyl-CoA, and of ornithine by transacetylation between acetylornithine and glutamate. The protein is Arginine biosynthesis bifunctional protein ArgJ, mitochondrial of Lodderomyces elongisporus (strain ATCC 11503 / CBS 2605 / JCM 1781 / NBRC 1676 / NRRL YB-4239) (Yeast).